Consider the following 94-residue polypeptide: Acylphosphatase (94 aa).

Residues 8–94 (TLFIIVHGKV…GRRFKHFAQH (87 aa)) enclose the Acylphosphatase-like domain. Active-site residues include Arg23 and Asn41. Residues 69 to 94 (PPAASVTELESRREDGGRRFKHFAQH) form a disordered region. Basic and acidic residues predominate over residues 77-86 (LESRREDGGR).

Belongs to the acylphosphatase family.

The catalysed reaction is an acyl phosphate + H2O = a carboxylate + phosphate + H(+). The polypeptide is Acylphosphatase (acyP) (Bordetella avium (strain 197N)).